A 358-amino-acid chain; its full sequence is S-adenosylmethionine decarboxylase proenzyme (358 aa).

Catalysis depends on residues Glu-11 and Glu-14. Ser-71 acts as the Schiff-base intermediate with substrate; via pyruvic acid in catalysis. At Ser-71 the chain carries Pyruvic acid (Ser); by autocatalysis. Cys-85 functions as the Proton donor; for catalytic activity in the catalytic mechanism. Active-site proton acceptor; for processing activity residues include Ser-234 and His-247.

It belongs to the eukaryotic AdoMetDC family. It depends on pyruvate as a cofactor. In terms of processing, is synthesized initially as an inactive proenzyme. Formation of the active enzyme involves a self-maturation process in which the active site pyruvoyl group is generated from an internal serine residue via an autocatalytic post-translational modification. Two non-identical subunits are generated from the proenzyme in this reaction, and the pyruvate is formed at the N-terminus of the alpha chain, which is derived from the carboxyl end of the proenzyme. The post-translation cleavage follows an unusual pathway, termed non-hydrolytic serinolysis, in which the side chain hydroxyl group of the serine supplies its oxygen atom to form the C-terminus of the beta chain, while the remainder of the serine residue undergoes an oxidative deamination to produce ammonia and the pyruvoyl group blocking the N-terminus of the alpha chain.

It catalyses the reaction S-adenosyl-L-methionine + H(+) = S-adenosyl 3-(methylsulfanyl)propylamine + CO2. It participates in amine and polyamine biosynthesis; S-adenosylmethioninamine biosynthesis; S-adenosylmethioninamine from S-adenosyl-L-methionine: step 1/1. The polypeptide is S-adenosylmethionine decarboxylase proenzyme (SAMDC) (Solanum chilense (Tomato)).